Consider the following 479-residue polypeptide: Solute carrier family 7 member 13 (479 aa).

Residues 1–14 are Cytoplasmic-facing; it reads MAMDIEKKIYLKRQ. Residues 15-35 form a helical membrane-spanning segment; the sequence is LGYFWGTNFLIINIIGAGIFV. The Extracellular segment spans residues 36–47; sequence SPKGVLQYSSMN. Residues 48–68 form a helical membrane-spanning segment; the sequence is VGVSLCVWVFCAVLSMTSTLC. Residues 69 to 89 lie on the Cytoplasmic side of the membrane; that stretch reads AAEIGITFPYTVAHYYFLKRC. The helical transmembrane segment at 90-110 threads the bilayer; it reads FGPFVAFLRLWTSLFTGPGVL. Residues 111–129 lie on the Extracellular side of the membrane; sequence ASQALLLAEYGIQPFYPSC. Residues 130–150 traverse the membrane as a helical segment; it reads SAPAVPKKCLALAMLWIVGIL. Residues 151–165 are Cytoplasmic-facing; sequence NSRGVKELSWLQTVS. Residues 166-186 traverse the membrane as a helical segment; the sequence is MVLKMGILSFISLSGLFLLVT. Residues 187–208 are Extracellular-facing; it reads GRKENVRRLQNAFDAEFPEVSR. A helical transmembrane segment spans residues 209–229; that stretch reads LIEAIFQGYFAFSGGGSFTYV. Residues 230–242 are Cytoplasmic-facing; it reads AGELKEPSKTIPR. The helical transmembrane segment at 243 to 263 threads the bilayer; it reads CIFTALPLVTVVYLLANLSYL. The Extracellular segment spans residues 264–289; the sequence is TVLSPQELLSSDAVALTWTDRVIPQL. The helical transmembrane segment at 290–310 threads the bilayer; that stretch reads TWSVPFAISASLFSNLVTSVF. Residues 311-338 are Cytoplasmic-facing; it reads ETSRTSYIASRNGQLPLLCSTLNVHSSP. A helical membrane pass occupies residues 339–359; sequence FIAVLLDVSMGSIAIVLTNLI. Residue Glu-360 is a topological domain, extracellular. A helical transmembrane segment spans residues 361–381; it reads LINYLFFVFSIWTVLSVIGIL. Over 382–396 the chain is Cytoplasmic; sequence KLRYQEPNLHRPYKV. Residues 397–417 form a helical membrane-spanning segment; sequence FSPFLFITAAISLSMVLIPLI. The Extracellular segment spans residues 418 to 423; sequence KSPKMQ. Residues 424 to 444 form a helical membrane-spanning segment; it reads YIYVFLFFLGGLLFYVPLIHF. Topologically, residues 445–479 are cytoplasmic; that stretch reads KLKLIWFQKLTCYLQLLFNICIPDVSDEHVAEEES.

This sequence belongs to the amino acid-polyamine-organocation (APC) superfamily. Disulfide-linked heterodimer composed of the catalytic light subunit SLC7A13 and the heavy subunit SLC3A1.

Its subcellular location is the apical cell membrane. It catalyses the reaction L-cystine(out) + L-aspartate(in) = L-cystine(in) + L-aspartate(out). The enzyme catalyses L-cystine(out) = L-cystine(in). The catalysed reaction is L-aspartate(in) + L-glutamate(out) = L-aspartate(out) + L-glutamate(in). It carries out the reaction L-aspartate(in) + L-glutamine(out) = L-aspartate(out) + L-glutamine(in). It catalyses the reaction L-aspartate(in) + L-methionine(out) = L-aspartate(out) + L-methionine(in). The enzyme catalyses L-leucine(out) + L-aspartate(in) = L-leucine(in) + L-aspartate(out). The catalysed reaction is L-valine(out) + L-aspartate(in) = L-valine(in) + L-aspartate(out). It carries out the reaction L-aspartate(in) + L-phenylalanine(out) = L-aspartate(out) + L-phenylalanine(in). It catalyses the reaction L-tyrosine(out) + L-aspartate(in) = L-tyrosine(in) + L-aspartate(out). The enzyme catalyses L-tryptophan(out) + L-aspartate(in) = L-tryptophan(in) + L-aspartate(out). Associates with SLC3A1/rBAT to form a functional heterodimeric complex that transports anionic and neutral amino acids across the apical plasma membrane of renal epithelium. Preferentially mediates exchange transport, but can also operate via facilitated diffusion. May act as a major transporter for L-cystine in late proximal tubules, ensuring its reabsorption from the luminal fluid in exchange for cytosolic L-glutamate or L-aspartate. This Rattus norvegicus (Rat) protein is Solute carrier family 7 member 13 (Slc7a13).